Reading from the N-terminus, the 405-residue chain is Formate-dependent phosphoribosylglycinamide formyltransferase (405 aa).

N(1)-(5-phospho-beta-D-ribosyl)glycinamide contacts are provided by residues Glu22–Leu23 and Glu82. ATP-binding positions include Arg115, Lys162, Ser167 to Gln172, Glu202 to Ile205, and Glu210. The ATP-grasp domain maps to Arg120–Leu320. Residues Glu279 and Glu291 each coordinate Mg(2+). Residues Asp298, Lys367, and Arg374–Arg375 each bind N(1)-(5-phospho-beta-D-ribosyl)glycinamide.

Belongs to the PurK/PurT family. In terms of assembly, homodimer.

It catalyses the reaction N(1)-(5-phospho-beta-D-ribosyl)glycinamide + formate + ATP = N(2)-formyl-N(1)-(5-phospho-beta-D-ribosyl)glycinamide + ADP + phosphate + H(+). It functions in the pathway purine metabolism; IMP biosynthesis via de novo pathway; N(2)-formyl-N(1)-(5-phospho-D-ribosyl)glycinamide from N(1)-(5-phospho-D-ribosyl)glycinamide (formate route): step 1/1. Its function is as follows. Involved in the de novo purine biosynthesis. Catalyzes the transfer of formate to 5-phospho-ribosyl-glycinamide (GAR), producing 5-phospho-ribosyl-N-formylglycinamide (FGAR). Formate is provided by PurU via hydrolysis of 10-formyl-tetrahydrofolate. This Leptothrix cholodnii (strain ATCC 51168 / LMG 8142 / SP-6) (Leptothrix discophora (strain SP-6)) protein is Formate-dependent phosphoribosylglycinamide formyltransferase.